The following is a 326-amino-acid chain: Protein TMED8 (326 aa).

Residues 1-99 (MSDRQAAEGP…EGQAPGEQAA (99 aa)) are disordered. Low complexity predominate over residues 50–65 (SSPLASASDPAAESSP). A GOLD domain is found at 160-324 (PPCVWTFAKV…NKTLYFHIYY (165 aa)). At K170 the chain carries N6-acetyllysine. The interval 234–268 (VQVSDSSEDEEEEEDEEEEIEEPVPVGDVERGSRS) is disordered. Acidic residues predominate over residues 239–255 (SSEDEEEEEDEEEEIEE).

This Mus musculus (Mouse) protein is Protein TMED8 (Tmed8).